Reading from the N-terminus, the 227-residue chain is Class I hydrophobin A (227 aa).

Residues 1-18 (MQFSLSAIVLGLAATVYA) form the signal peptide. Asn50 carries N-linked (GlcNAc...) asparagine glycosylation. 3 cysteine pairs are disulfide-bonded: Cys60–Cys138, Cys68–Cys132, and Cys69–Cys109.

This sequence belongs to the fungal hydrophobin family.

It is found in the secreted. It localises to the cell wall. In terms of biological role, aerial growth, conidiation, and dispersal of filamentous fungi in the environment rely upon a capability of their secreting small amphipathic proteins called hydrophobins (HPBs) with low sequence identity. Class I can self-assemble into an outermost layer of rodlet bundles on aerial cell surfaces, conferring cellular hydrophobicity that supports fungal growth, development and dispersal; whereas Class II form highly ordered films at water-air interfaces through intermolecular interactions but contribute nothing to the rodlet structure. In P.expansum, hydrophobins contribute to germination, tolerance to cold stress and mycotoxins patulin and citrinin production. HfbA and HfbB are essential for fungal surface hydrophobicity and HfbA mediates air and water dispersal. The sequence is that of Class I hydrophobin A from Penicillium expansum (Blue mold rot fungus).